Here is a 591-residue protein sequence, read N- to C-terminus: Aspartate--tRNA(Asp/Asn) ligase (591 aa).

E174 serves as a coordination point for L-aspartate. The interval Q198–K201 is aspartate. R220 contributes to the L-aspartate binding site. Residues R220–E222 and Q229 contribute to the ATP site. H450 is a binding site for L-aspartate. Residue E483 coordinates ATP. R490 provides a ligand contact to L-aspartate. Position 535 to 538 (G535 to R538) interacts with ATP.

The protein belongs to the class-II aminoacyl-tRNA synthetase family. Type 1 subfamily. As to quaternary structure, homodimer.

It is found in the cytoplasm. It catalyses the reaction tRNA(Asx) + L-aspartate + ATP = L-aspartyl-tRNA(Asx) + AMP + diphosphate. In terms of biological role, aspartyl-tRNA synthetase with relaxed tRNA specificity since it is able to aspartylate not only its cognate tRNA(Asp) but also tRNA(Asn). Reaction proceeds in two steps: L-aspartate is first activated by ATP to form Asp-AMP and then transferred to the acceptor end of tRNA(Asp/Asn). In Azotobacter vinelandii (strain DJ / ATCC BAA-1303), this protein is Aspartate--tRNA(Asp/Asn) ligase.